The chain runs to 857 residues: DNA mismatch repair protein MutS (857 aa).

Gly603–Ser610 contributes to the ATP binding site.

The protein belongs to the DNA mismatch repair MutS family.

This protein is involved in the repair of mismatches in DNA. It is possible that it carries out the mismatch recognition step. This protein has a weak ATPase activity. This is DNA mismatch repair protein MutS from Methanothrix thermoacetophila (strain DSM 6194 / JCM 14653 / NBRC 101360 / PT) (Methanosaeta thermophila).